The sequence spans 366 residues: MELRDLSDHVEYRAGRGIEEVARELGRDPSEFVKLSSNENPHGPSPKATIAIREAATGVHRYPKAVHADLTGALADRWDVGDDQVWVANGGDGALDYLARATLDPGDSVLVPSPGFTYYGMSARFHHGNVAEYDVAEGADGFEMTADAVVDAYDGERVVYLTTPHNPTGARFTLDEIVAVADRTDEDTLVLVDEAYGEFTETPSAVTLFDGQPAGGHAPRDDIAVLRTFSKAYGLAGIRLGYAVVPDSWADAYARVQTPFAASVIACQAGVAALDDDDHVEATTDSVAWGRDYIHDELAARTYESHGNFVLANVGDAGRVAEAAKREGVLVRDCTSFGLPEHVRITIGTRSETERAVAVLNEVCDT.

K231 is modified (N6-(pyridoxal phosphate)lysine).

Belongs to the class-II pyridoxal-phosphate-dependent aminotransferase family. Histidinol-phosphate aminotransferase subfamily. It depends on pyridoxal 5'-phosphate as a cofactor.

The catalysed reaction is L-histidinol phosphate + 2-oxoglutarate = 3-(imidazol-4-yl)-2-oxopropyl phosphate + L-glutamate. It functions in the pathway amino-acid biosynthesis; L-histidine biosynthesis; L-histidine from 5-phospho-alpha-D-ribose 1-diphosphate: step 7/9. In Halobacterium salinarum (strain ATCC 29341 / DSM 671 / R1), this protein is Histidinol-phosphate aminotransferase.